Reading from the N-terminus, the 204-residue chain is Urease accessory protein UreG (204 aa).

13-20 (GPVGSGKT) is a binding site for GTP.

Belongs to the SIMIBI class G3E GTPase family. UreG subfamily. In terms of assembly, homodimer. UreD, UreF and UreG form a complex that acts as a GTP-hydrolysis-dependent molecular chaperone, activating the urease apoprotein by helping to assemble the nickel containing metallocenter of UreC. The UreE protein probably delivers the nickel.

It localises to the cytoplasm. Functionally, facilitates the functional incorporation of the urease nickel metallocenter. This process requires GTP hydrolysis, probably effectuated by UreG. This Acinetobacter baylyi (strain ATCC 33305 / BD413 / ADP1) protein is Urease accessory protein UreG.